The chain runs to 218 residues: Ras-related protein R-Ras (218 aa).

Residues 1-30 form a disordered region; the sequence is MSSGAASGTGRGRPRGGGPGPRDPPPGETH. Residues 7–20 show a composition bias toward gly residues; that stretch reads SGTGRGRPRGGGPG. 36–44 serves as a coordination point for GTP; the sequence is GGGGVGKSA. The short motif at 58 to 66 is the Effector region element; sequence YDPTIEDSY. GTP-binding positions include 83 to 87, 142 to 145, and 172 to 174; these read DTAGQ, NKAD, and SAK. Residue cysteine 215 is modified to Cysteine methyl ester. Cysteine 215 is lipidated: S-geranylgeranyl cysteine. Residues 216–218 constitute a propeptide, removed in mature form; it reads VLL.

The protein belongs to the small GTPase superfamily. Ras family. As to quaternary structure, interacts with PLCE1. Interacts (active GTP-bound form preferentially) with RGS14. Interacts with OSBPL3. Interacts with ZDHHC19. Post-translationally, S-palmitoylated by ZDHHC19, leading to increased association with membranes and with rafts/caveolae as well as enhanced cell viability.

Its subcellular location is the cell membrane. The catalysed reaction is GTP + H2O = GDP + phosphate + H(+). Functionally, GTP-binding protein with GTPase activity, likely involved in the regulation of MAPK signaling pathway and thereby controlling multiple cellular processes. Regulates the organization of the actin cytoskeleton. With OSPBL3, modulates integrin beta-1 (ITGB1) activity. In Mus musculus (Mouse), this protein is Ras-related protein R-Ras (Rras).